The chain runs to 204 residues: Recombination protein RecR (204 aa).

The C4-type zinc-finger motif lies at 63–78 (CRICCNVADSELCPIC). In terms of domain architecture, Toprim spans 86–181 (NKICVVEQPQ…KVTRLARGLP (96 aa)).

The protein belongs to the RecR family.

In terms of biological role, may play a role in DNA repair. It seems to be involved in an RecBC-independent recombinational process of DNA repair. It may act with RecF and RecO. The polypeptide is Recombination protein RecR (Dehalococcoides mccartyi (strain ATCC BAA-2100 / JCM 16839 / KCTC 5957 / BAV1)).